A 317-amino-acid chain; its full sequence is Hps1-dma1 cluster cytochrome P450 monooxygenase cyp3.1 (317 aa).

The interval 183 to 205 (PAIETDRKTSSHSRSPTALADKQ) is disordered. Cys260 is a heme binding site.

Belongs to the cytochrome P450 family. Heme is required as a cofactor.

Its pathway is secondary metabolite biosynthesis. In terms of biological role, cytochrome P450 monooxygenase; part of the hps1-dma1 gene cluster that probably mediates the biosynthesis a derivative of cyclopiazonic acid (CPA). The hybrid polyketide synthase-nonribosomal peptide synthetase (PKS-NRPS) nps1 might incorporates acetyl-CoA, malonyl-CoA, and tryptophan (Trp) and utilizes a C-terminal redox-incompetent reductase domain to make and release the tryptophan tetramic acid, cyclo-acetoacetyl-L-tryptophan (c-AATrp), as the first intermediate in the pathway. In addition, the cluster also includes the tryptophan dimethylallyltransferase dma1, the FAD-dependent oxidoreductase toxD, the cytochrome P450 monooxygenase cyp3.1 and the methyltransferase DOTSEDRAFT_139328; the latter 2 being not present in all CPA-producing fungi but involved in additional modifications that occur in biosynthesis the of a range of CPA and CPA-like products. Further studies are required to clarify whether the CPA-like hps1-dma1 cluster is functional or a non-functional relic reflecting evolution of D.septosporum. The chain is Hps1-dma1 cluster cytochrome P450 monooxygenase cyp3.1 (cyp3.1) from Dothistroma septosporum (strain NZE10 / CBS 128990) (Red band needle blight fungus).